The sequence spans 293 residues: N-acetylneuraminate lyase (293 aa).

Ser48 and Ser49 together coordinate aceneuramate. Tyr137 acts as the Proton donor in catalysis. Lys165 functions as the Schiff-base intermediate with substrate in the catalytic mechanism. Positions 167, 189, 191, 192, and 208 each coordinate aceneuramate.

This sequence belongs to the DapA family. NanA subfamily. As to quaternary structure, homotetramer.

It localises to the cytoplasm. It catalyses the reaction aceneuramate = aldehydo-N-acetyl-D-mannosamine + pyruvate. It participates in amino-sugar metabolism; N-acetylneuraminate degradation; D-fructose 6-phosphate from N-acetylneuraminate: step 1/5. In terms of biological role, catalyzes the reversible aldol cleavage of N-acetylneuraminic acid (sialic acid; Neu5Ac) to form pyruvate and N-acetylmannosamine (ManNAc) via a Schiff base intermediate. This is N-acetylneuraminate lyase from Staphylococcus carnosus (strain TM300).